The following is a 117-amino-acid chain: G antigen 6 (117 aa).

A disordered region spans residues 1 to 117; sequence MSWRGRSTYY…PEEGEKQSQC (117 aa). Acidic residues-rich tracts occupy residues 32–45 and 87–96; these read FSDEVEPATPEEGE and ECEDGPDGQE. Basic and acidic residues predominate over residues 103 to 117; it reads EEVKTPEEGEKQSQC.

Belongs to the GAGE family. As to expression, expressed in a variety of tumor tissues but not in normal tissues, except testis.

This is G antigen 6 (GAGE6) from Homo sapiens (Human).